The primary structure comprises 592 residues: 2-succinyl-5-enolpyruvyl-6-hydroxy-3-cyclohexene-1-carboxylate synthase (592 aa).

Belongs to the TPP enzyme family. MenD subfamily. Homodimer. It depends on Mg(2+) as a cofactor. Mn(2+) serves as cofactor. Requires thiamine diphosphate as cofactor.

The catalysed reaction is isochorismate + 2-oxoglutarate + H(+) = 5-enolpyruvoyl-6-hydroxy-2-succinyl-cyclohex-3-ene-1-carboxylate + CO2. Its pathway is quinol/quinone metabolism; 1,4-dihydroxy-2-naphthoate biosynthesis; 1,4-dihydroxy-2-naphthoate from chorismate: step 2/7. The protein operates within quinol/quinone metabolism; menaquinone biosynthesis. Its function is as follows. Catalyzes the thiamine diphosphate-dependent decarboxylation of 2-oxoglutarate and the subsequent addition of the resulting succinic semialdehyde-thiamine pyrophosphate anion to isochorismate to yield 2-succinyl-5-enolpyruvyl-6-hydroxy-3-cyclohexene-1-carboxylate (SEPHCHC). This is 2-succinyl-5-enolpyruvyl-6-hydroxy-3-cyclohexene-1-carboxylate synthase from Leifsonia xyli subsp. xyli (strain CTCB07).